Consider the following 77-residue polypeptide: Acyl carrier protein (77 aa).

The 76-residue stretch at 1-76 (MSLEDDVKAI…DVIKYIQERQ (76 aa)) folds into the Carrier domain. S36 is subject to O-(pantetheine 4'-phosphoryl)serine.

This sequence belongs to the acyl carrier protein (ACP) family. 4'-phosphopantetheine is transferred from CoA to a specific serine of apo-ACP by AcpS. This modification is essential for activity because fatty acids are bound in thioester linkage to the sulfhydryl of the prosthetic group.

The protein localises to the cytoplasm. Its pathway is lipid metabolism; fatty acid biosynthesis. Functionally, carrier of the growing fatty acid chain in fatty acid biosynthesis. The sequence is that of Acyl carrier protein from Chlamydia muridarum (strain MoPn / Nigg).